The following is a 163-amino-acid chain: Cytochrome b6-f complex subunit 4 (163 aa).

Transmembrane regions (helical) follow at residues 36 to 56 (LLYI…GLAV), 95 to 115 (LLGV…PFLE), and 131 to 151 (TVFL…TLPI).

The protein belongs to the cytochrome b family. PetD subfamily. The 4 large subunits of the cytochrome b6-f complex are cytochrome b6, subunit IV (17 kDa polypeptide, petD), cytochrome f and the Rieske protein, while the 4 small subunits are petG, petL, petM and petN. The complex functions as a dimer.

The protein localises to the plastid. The protein resides in the chloroplast thylakoid membrane. Component of the cytochrome b6-f complex, which mediates electron transfer between photosystem II (PSII) and photosystem I (PSI), cyclic electron flow around PSI, and state transitions. This Pelargonium hortorum (Common geranium) protein is Cytochrome b6-f complex subunit 4.